A 373-amino-acid chain; its full sequence is MLVSQRVTGARARAPQLAGLLEAWYRHGRTTSSYSALSEPSRVRALVYGNHGDPAKVVQLKNLELTAVEGSDVHVRMLAAPINPSDINMIQGNYGLLPKLPAVGGNEGVGQVIAVGSSVSALKPGDWVIPANAGLGTWRTEAVFSEEALIGIPKDIPLQSAATLGVNPCTAYRMLVDFEQLQPGDSVIQNASNSGVGQAVIQIASALRLKTINVVRDRPDIKKLTDRLKDLGADYVLTEEELRMPETKTIFKDLPLPRLALNCVGGKSSTELLRHLAPGGTMVTYGGMAKQPVTASVSLLIFKDLKLRGFWLSQWKKNHSPDEFKELILTLCNLIRQGRLTAPSCSEVPLQGYQQALEASMKPFVSSKQILTM.

Residues Met1–Asp53 constitute a mitochondrion transit peptide. Lys61 bears the N6-acetyllysine; alternate mark. Lys61 is subject to N6-succinyllysine; alternate. Catalysis depends on Tyr94, which acts as the Proton donor. NADP(+) is bound by residues Asn167, Asn193–Val196, and Arg216–Arg218. An N6-acetyllysine; alternate mark is found at Lys252 and Lys267. N6-succinyllysine; alternate is present on residues Lys252 and Lys267. NADP(+) is bound by residues Tyr285–Met288 and Phe310–Leu312. N6-succinyllysine is present on Lys316. Residue Lys368 participates in NADP(+) binding.

Belongs to the zinc-containing alcohol dehydrogenase family. Quinone oxidoreductase subfamily. As to quaternary structure, homodimer. Expressed in Purkinje cells (at protein level).

The protein resides in the mitochondrion. The catalysed reaction is a 2,3-saturated acyl-[ACP] + NADP(+) = a (2E)-enoyl-[ACP] + NADPH + H(+). It catalyses the reaction (2E)-butenoyl-[ACP] + NADPH + H(+) = butanoyl-[ACP] + NADP(+). It carries out the reaction (2E)-hexenoyl-[ACP] + NADPH + H(+) = hexanoyl-[ACP] + NADP(+). The enzyme catalyses (2E)-octenoyl-[ACP] + NADPH + H(+) = octanoyl-[ACP] + NADP(+). The catalysed reaction is (2E)-decenoyl-[ACP] + NADPH + H(+) = decanoyl-[ACP] + NADP(+). It catalyses the reaction (2E)-dodecenoyl-[ACP] + NADPH + H(+) = dodecanoyl-[ACP] + NADP(+). It carries out the reaction (2E)-tetradecenoyl-[ACP] + NADPH + H(+) = tetradecanoyl-[ACP] + NADP(+). The enzyme catalyses (2E)-hexadecenoyl-[ACP] + NADPH + H(+) = hexadecanoyl-[ACP] + NADP(+). Functionally, catalyzes the NADPH-dependent reduction of trans-2-enoyl thioesters in mitochondrial fatty acid synthesis (fatty acid synthesis type II). Fatty acid chain elongation in mitochondria uses acyl carrier protein (ACP) as an acyl group carrier, but the enzyme accepts both ACP and CoA thioesters as substrates in vitro. Displays a preference for medium-chain over short- and long-chain substrates. May provide the octanoyl chain used for lipoic acid biosynthesis, regulating protein lipoylation and mitochondrial respiratory activity particularly in Purkinje cells. Involved in iron homeostasis; affecting Fe-S cluster assembly and ceramide metabolism. Required for proper morphology and bioenergetic functions of mitochondria. Required for maintenance of neurons. In Mus musculus (Mouse), this protein is Enoyl-[acyl-carrier-protein] reductase, mitochondrial (Mecr).